The following is a 202-amino-acid chain: Riboflavin synthase (202 aa).

2 Lumazine-binding repeats span residues 1–101 and 102–198; these read MFTG…MGGH and LVFG…ARLA. 2,4-dihydroxypteridine is bound by residues 4-6, 47-49, 66-68, 105-107, lysine 140, 149-151, and 163-168; these read GII, CLT, EAW, GHV, SLT, and LLIRHS.

Homotrimer.

The enzyme catalyses 2 6,7-dimethyl-8-(1-D-ribityl)lumazine + H(+) = 5-amino-6-(D-ribitylamino)uracil + riboflavin. The protein operates within cofactor biosynthesis; riboflavin biosynthesis; riboflavin from 2-hydroxy-3-oxobutyl phosphate and 5-amino-6-(D-ribitylamino)uracil: step 2/2. Its activity is regulated as follows. Is inhibited by riboflavin. Product inhibition may be the major mechanism by which RS regulates its enzymatic activity in vivo. In terms of biological role, catalyzes the dismutation of two molecules of 6,7-dimethyl-8-ribityllumazine, resulting in the formation of riboflavin and 5-amino-6-(D-ribitylamino)uracil. This is Riboflavin synthase from Brucella abortus (strain 2308).